The sequence spans 358 residues: Feruloyl CoA ortho-hydroxylase F6H1-3 (358 aa).

The 109-residue stretch at Thr-200 to Pro-308 folds into the Fe2OG dioxygenase domain. Residue Tyr-216 participates in 2-oxoglutarate binding. The Fe cation site is built by His-231, Asp-233, and His-289. 2-oxoglutarate-binding residues include Arg-299 and Ser-301.

This sequence belongs to the iron/ascorbate-dependent oxidoreductase family. The cofactor is L-ascorbate. It depends on Fe(2+) as a cofactor. In terms of tissue distribution, mostly expressed in tubers, and, at low levels, in underground stems, stems, leaves and petioles.

The enzyme catalyses (E)-feruloyl-CoA + 2-oxoglutarate + O2 = (E)-6-hydroxyferuloyl-CoA + succinate + CO2. Its pathway is phenylpropanoid metabolism. Its function is as follows. 2-oxoglutarate (OG)- and Fe(II)-dependent dioxygenase (2OGD) involved in scopoletin biosynthesis. Converts feruloyl CoA into 6'-hydroxyferuloyl CoA, and, at low efficiency, caffeoyl-CoA into 6'-hydroxycaffeate, but has no activity with p-coumaroyl-CoA. The sequence is that of Feruloyl CoA ortho-hydroxylase F6H1-3 from Ipomoea batatas (Sweet potato).